Reading from the N-terminus, the 156-residue chain is Small ribosomal subunit protein uS7 (156 aa).

It belongs to the universal ribosomal protein uS7 family. In terms of assembly, part of the 30S ribosomal subunit. Contacts proteins S9 and S11.

Its function is as follows. One of the primary rRNA binding proteins, it binds directly to 16S rRNA where it nucleates assembly of the head domain of the 30S subunit. Is located at the subunit interface close to the decoding center, probably blocks exit of the E-site tRNA. In Shewanella piezotolerans (strain WP3 / JCM 13877), this protein is Small ribosomal subunit protein uS7.